The primary structure comprises 463 residues: Lactaldehyde dehydrogenase (463 aa).

220–225 (GSSKVG) is a binding site for NAD(+). Catalysis depends on residues Glu-240 and Cys-274.

The protein belongs to the aldehyde dehydrogenase family. As to quaternary structure, homotetramer.

It carries out the reaction (S)-lactaldehyde + NAD(+) + H2O = (S)-lactate + NADH + 2 H(+). It participates in cofactor biosynthesis; coenzyme F420 biosynthesis. Involved in F420 biosynthesis through the oxidation of lactaldehyde to lactate. The substrate preference order is propionaldehyde &gt; DL-lactaldehyde, DL-glyceraldehyde &gt; crotonaldehyde &gt; glycolaldehyde &gt; acetaldehyde, acrolein &gt; formaldehyde. No activity was observed towards methylglyoxal or glyceraldehyde-3-phosphate. Has a preference for NAD over NADP. The sequence is that of Lactaldehyde dehydrogenase from Methanocaldococcus jannaschii (strain ATCC 43067 / DSM 2661 / JAL-1 / JCM 10045 / NBRC 100440) (Methanococcus jannaschii).